The primary structure comprises 72 residues: Translation initiation factor IF-1 (72 aa).

The S1-like domain occupies 1–72 (MAKDDVIQMQ…SRARIVFRTK (72 aa)).

Belongs to the IF-1 family. As to quaternary structure, component of the 30S ribosomal translation pre-initiation complex which assembles on the 30S ribosome in the order IF-2 and IF-3, IF-1 and N-formylmethionyl-tRNA(fMet); mRNA recruitment can occur at any time during PIC assembly.

It localises to the cytoplasm. One of the essential components for the initiation of protein synthesis. Stabilizes the binding of IF-2 and IF-3 on the 30S subunit to which N-formylmethionyl-tRNA(fMet) subsequently binds. Helps modulate mRNA selection, yielding the 30S pre-initiation complex (PIC). Upon addition of the 50S ribosomal subunit IF-1, IF-2 and IF-3 are released leaving the mature 70S translation initiation complex. In Herminiimonas arsenicoxydans, this protein is Translation initiation factor IF-1.